The sequence spans 123 residues: MPTINQLIANGREPAAKRNKVPALQGCPQKRGVCTRVYTVTPKKPNSALRKVAKVRLTNGYEVVSYIPGEGHNLQEHSVVLIRGGRVKDLPGVRYHILRGVLDTQGLAKRRQRRSLYGAKRPK.

D89 is subject to 3-methylthioaspartic acid.

Belongs to the universal ribosomal protein uS12 family. As to quaternary structure, part of the 30S ribosomal subunit. Contacts proteins S8 and S17. May interact with IF1 in the 30S initiation complex.

With S4 and S5 plays an important role in translational accuracy. In terms of biological role, interacts with and stabilizes bases of the 16S rRNA that are involved in tRNA selection in the A site and with the mRNA backbone. Located at the interface of the 30S and 50S subunits, it traverses the body of the 30S subunit contacting proteins on the other side and probably holding the rRNA structure together. The combined cluster of proteins S8, S12 and S17 appears to hold together the shoulder and platform of the 30S subunit. In Gluconobacter oxydans (strain 621H) (Gluconobacter suboxydans), this protein is Small ribosomal subunit protein uS12.